The following is a 199-amino-acid chain: Insertion sequence IS21-like putative ATP-binding protein (199 aa).

Residue 114–121 (GDSGTGKT) coordinates ATP.

The protein belongs to the IS21/IS1162 putative ATP-binding protein family.

The chain is Insertion sequence IS21-like putative ATP-binding protein (tnpB) from Bacteroides fragilis (strain YCH46).